The primary structure comprises 374 residues: MDSLDAFATGKLDALEAGSLRRKLVPTERGSGAAAARRGRALVSFSCNDYLGLSHHPRVIAAAQAAAASHGAGAGGSRLVTGDHPYLGALEDGLARHKGAEAALVFGSGYLANLGITPALAGRGDLVLLDELSHACMWAGARLSGAQVMTFRHNDPGDLAARLAEHRPHHGRALVLTERVFSMDGDRAPLGDILGIAESYDAWTLVDDAHGIGVVEDGPRAPLEMGTLSKALGSYGGYLCASRPVVDLMTSRARSFVYTTGLPPASAAAALEALAILEAEPERRARPLALARRFTARLGLPEAESAVVPVLVGEAQAALDISAALEAAGFLVVAIRPPTVPAGTARLRVAFSAAHDEAQVDALAEAVAALTGRA.

Positions 22 and 29 each coordinate substrate. Pyridoxal 5'-phosphate is bound at residue 109 to 110; that stretch reads GY. Substrate is bound at residue His134. Residues Ser182, 207-210, and 227-230 contribute to the pyridoxal 5'-phosphate site; these read DDAH and TLSK. Lys230 bears the N6-(pyridoxal phosphate)lysine mark. Thr339 is a binding site for substrate.

It belongs to the class-II pyridoxal-phosphate-dependent aminotransferase family. BioF subfamily. In terms of assembly, homodimer. Pyridoxal 5'-phosphate is required as a cofactor.

It catalyses the reaction 6-carboxyhexanoyl-[ACP] + L-alanine + H(+) = (8S)-8-amino-7-oxononanoate + holo-[ACP] + CO2. The protein operates within cofactor biosynthesis; biotin biosynthesis. Its function is as follows. Catalyzes the decarboxylative condensation of pimeloyl-[acyl-carrier protein] and L-alanine to produce 8-amino-7-oxononanoate (AON), [acyl-carrier protein], and carbon dioxide. The chain is 8-amino-7-oxononanoate synthase from Methylobacterium radiotolerans (strain ATCC 27329 / DSM 1819 / JCM 2831 / NBRC 15690 / NCIMB 10815 / 0-1).